The following is a 111-amino-acid chain: Rubredoxin (111 aa).

The Rubredoxin-like domain maps to 11-62; the sequence is LDRFECRSCGYVYEPEKGDNKHDIAPETPFAELPINWRCPVCTAKKAAFTNI. Residues cysteine 16, cysteine 19, cysteine 49, and cysteine 52 each coordinate Fe cation.

Belongs to the rubredoxin family. Fe(3+) serves as cofactor.

Its function is as follows. Rubredoxin is a small nonheme, iron protein lacking acid-labile sulfide. Its single Fe, chelated to 4 Cys, functions as an electron acceptor and may also stabilize the conformation of the molecule. Could be involved in hydrogenase-linked redox processes. The chain is Rubredoxin (rub) from Nostoc sp. (strain PCC 7120 / SAG 25.82 / UTEX 2576).